Reading from the N-terminus, the 251-residue chain is 5-oxoprolinase subunit A (251 aa).

The protein belongs to the LamB/PxpA family. Forms a complex composed of PxpA, PxpB and PxpC.

The catalysed reaction is 5-oxo-L-proline + ATP + 2 H2O = L-glutamate + ADP + phosphate + H(+). Functionally, catalyzes the cleavage of 5-oxoproline to form L-glutamate coupled to the hydrolysis of ATP to ADP and inorganic phosphate. The protein is 5-oxoprolinase subunit A of Vibrio parahaemolyticus serotype O3:K6 (strain RIMD 2210633).